Reading from the N-terminus, the 322-residue chain is Phospho-N-acetylmuramoyl-pentapeptide-transferase (322 aa).

10 helical membrane-spanning segments follow: residues I9–M29, T54–W74, V82–I102, I122–Y142, F145–G165, L176–F196, N200–F220, I227–M247, L255–F275, and V302–G322.

Belongs to the glycosyltransferase 4 family. MraY subfamily. The cofactor is Mg(2+).

Its subcellular location is the cell membrane. It catalyses the reaction UDP-N-acetyl-alpha-D-muramoyl-L-alanyl-gamma-D-glutamyl-L-lysyl-D-alanyl-D-alanine + di-trans,octa-cis-undecaprenyl phosphate = Mur2Ac(oyl-L-Ala-gamma-D-Glu-L-Lys-D-Ala-D-Ala)-di-trans,octa-cis-undecaprenyl diphosphate + UMP. The protein operates within cell wall biogenesis; peptidoglycan biosynthesis. Catalyzes the initial step of the lipid cycle reactions in the biosynthesis of the cell wall peptidoglycan: transfers peptidoglycan precursor phospho-MurNAc-pentapeptide from UDP-MurNAc-pentapeptide onto the lipid carrier undecaprenyl phosphate, yielding undecaprenyl-pyrophosphoryl-MurNAc-pentapeptide, known as lipid I. The chain is Phospho-N-acetylmuramoyl-pentapeptide-transferase from Lactobacillus acidophilus (strain ATCC 700396 / NCK56 / N2 / NCFM).